A 674-amino-acid polypeptide reads, in one-letter code: Acyl-coenzyme A oxidase acox-1.1 (674 aa).

FAD is bound by residues 149 to 152, 157 to 158, and glycine 191; these read YAQT and GT. Substrate-binding positions include 285–288 and arginine 295; that span reads KINY. Residues arginine 320 and 340–343 contribute to the FAD site; that span reads QQHR. 4 residues coordinate ATP: histidine 342, serine 392, histidine 396, and glutamine 404. Glycine 411 is a binding site for FAD. 433 to 434 lines the substrate pocket; sequence YE. The active-site Proton acceptor is glutamate 434. FAD is bound at residue glutamate 436. ATP is bound by residues 533-536 and tyrosine 581; that span reads RASR. The short motif at 672–674 is the Microbody targeting signal element; that stretch reads SKL.

It belongs to the acyl-CoA oxidase family. As to quaternary structure, homodimer. Forms a heterodimer with acox-1.2. Forms a heterodimer with acox-1.3; the interaction may be important for the stability of acox-1.3. FAD serves as cofactor. As to expression, expressed in hypodermis and intestine.

It is found in the peroxisome. The catalysed reaction is nonanoyl-CoA + O2 = (2E)-nonenoyl-CoA + H2O2. It catalyses the reaction dodecanoyl-CoA + O2 = (2E)-dodecenoyl-CoA + H2O2. It carries out the reaction a 2,3-saturated acyl-CoA + O2 = a (2E)-enoyl-CoA + H2O2. The enzyme catalyses heptanoyl-CoA + O2 = (2E)-heptenoyl-CoA + H2O2. The catalysed reaction is (8R)-8-hydroxynonanoyl-CoA + O2 = (2E,8R)-8-hydroxynonenoyl-CoA + H2O2. It catalyses the reaction pentanoyl-CoA + O2 = (2E)-pentenoyl-CoA + H2O2. It carries out the reaction hexadecanoyl-CoA + O2 = (2E)-hexadecenoyl-CoA + H2O2. The enzyme catalyses IC-asc-C7-CoA + O2 = IC-asc-DeltaC7-CoA + H2O2. The catalysed reaction is IC-asc-C9-CoA + O2 = IC-asc-DeltaC9-CoA + H2O2. It catalyses the reaction asc-omegaC5-CoA + O2 = asc-omegaDeltaC5-CoA + H2O2. It carries out the reaction asc-C7-CoA + O2 = asc-DeltaC7-CoA + H2O2. The enzyme catalyses asc-omegaC7-CoA + O2 = asc-omegaDeltaC7-CoA + H2O2. The catalysed reaction is asc-C9-CoA + O2 = asc-DeltaC9-CoA + H2O2. It catalyses the reaction asc-C13-CoA + O2 = asc-DeltaC13-CoA + H2O2. Its pathway is lipid metabolism; peroxisomal fatty acid beta-oxidation. Its activity is regulated as follows. Activated by ATP. ATP binding leads to a conformational change that promotes FAD cofactor binding and enzyme activity. ATP binding likely occurs during acox-1.1 folding and/or dimer formation. In terms of biological role, involved in the first step of peroxisomal beta-oxidation by catalyzing the desaturation of fatty acid-derived side chains. Specifically, catalyzes the desaturation of fatty acids heptanoyl-CoA (C7), nonanoyl-CoA (C9), dodecanoyl-CoA (C12) and to a lesser extent pentanoyl-CoA (C5) and hexadecanoyl-CoA (C16), and hydroxylated fatty acid hydroxynonanoyl-CoA. Also, catalyzes the desaturation fatty acid-derived side chains of ascaroside pheromones, which regulates development and behavior. Specifically, shortens ascaroside with 5-carbon omega side chain (asc-omega-C5), 7-carbon side chain (asc-C7), 9-carbon side chain (asc-C9), 11-carbon side chain (asc-C11), 13-carbon side chain (asc-C13), 15-carbon side chain (asc-C15) and to a lesser extent ascarosides with 7-omega-carbon side chain (asc-omega-C7). Also shortens indol-3-carbonyl(IC)-ascarosides with 7-carbon side chain (IC-asc-C7) and to a lesser extent (IC)-ascarosides with 9-carbon side chain (IC-asc-C9). May associate and regulate the folding and/or the catalytic activity of other acyl-coenzyme A oxidases including acox-1.2, acox-1.3, acox-1.4 and acox-3 modulating the type of ascarosides produced. In association with acox-1.3, catalyzes the desaturation of asc-C7-CoA but not of fatty acids or hydroxylated fatty acids. Involved in the biosynthesis of asc-C6-MK (daumone 2) and asc-delta-C9 (daumone 3) but not asc-C7 (daumone 1); daumones are pheromones produced during unfavourable growth conditions which promote entry into the dauer stage. In Caenorhabditis elegans, this protein is Acyl-coenzyme A oxidase acox-1.1.